We begin with the raw amino-acid sequence, 397 residues long: Argininosuccinate synthase (397 aa).

9–17 (AYSGGLDTS) provides a ligand contact to ATP. L-citrulline is bound at residue Y86. G116 contacts ATP. L-aspartate contacts are provided by T118, N122, and D123. L-citrulline is bound at residue N122. L-citrulline is bound by residues R126, S174, E259, and Y271.

The protein belongs to the argininosuccinate synthase family. Type 1 subfamily. In terms of assembly, homotetramer.

It localises to the cytoplasm. The catalysed reaction is L-citrulline + L-aspartate + ATP = 2-(N(omega)-L-arginino)succinate + AMP + diphosphate + H(+). Its pathway is amino-acid biosynthesis; L-arginine biosynthesis; L-arginine from L-ornithine and carbamoyl phosphate: step 2/3. The chain is Argininosuccinate synthase from Lactococcus lactis subsp. cremoris (strain SK11).